Consider the following 308-residue polypeptide: Phosphoribosylaminoimidazole-succinocarboxamide synthase (308 aa).

This sequence belongs to the SAICAR synthetase family.

The enzyme catalyses 5-amino-1-(5-phospho-D-ribosyl)imidazole-4-carboxylate + L-aspartate + ATP = (2S)-2-[5-amino-1-(5-phospho-beta-D-ribosyl)imidazole-4-carboxamido]succinate + ADP + phosphate + 2 H(+). It functions in the pathway purine metabolism; IMP biosynthesis via de novo pathway; 5-amino-1-(5-phospho-D-ribosyl)imidazole-4-carboxamide from 5-amino-1-(5-phospho-D-ribosyl)imidazole-4-carboxylate: step 1/2. This chain is Phosphoribosylaminoimidazole-succinocarboxamide synthase, found in Xanthomonas euvesicatoria pv. vesicatoria (strain 85-10) (Xanthomonas campestris pv. vesicatoria).